The sequence spans 484 residues: uncharacterized protein (484 aa).

Residues Thr47–Phe226 enclose the FAD-binding PCMH-type domain.

This sequence belongs to the FAD-binding oxidoreductase/transferase type 4 family.

This is an uncharacterized protein from Escherichia coli (strain K12).